Consider the following 222-residue polypeptide: GTP cyclohydrolase 1 (222 aa).

Zn(2+)-binding residues include Cys-111, His-114, and Cys-182.

Belongs to the GTP cyclohydrolase I family. Homomer.

It carries out the reaction GTP + H2O = 7,8-dihydroneopterin 3'-triphosphate + formate + H(+). Its pathway is cofactor biosynthesis; 7,8-dihydroneopterin triphosphate biosynthesis; 7,8-dihydroneopterin triphosphate from GTP: step 1/1. This Shigella boydii serotype 18 (strain CDC 3083-94 / BS512) protein is GTP cyclohydrolase 1.